Here is a 1863-residue protein sequence, read N- to C-terminus: Breast cancer type 1 susceptibility protein homolog (1863 aa).

At Met-1 the chain carries N-acetylmethionine. The RING-type zinc finger occupies 24–65 (CPICLELIKEPVSTKCDHIFCRFCMLKLLNQKKGPSQCPLCK). Lys-109 is covalently cross-linked (Glycyl lysine isopeptide (Lys-Gly) (interchain with G-Cter in SUMO2)). The residue at position 114 (Ser-114) is a Phosphoserine. Basic and acidic residues-rich tracts occupy residues 231–240 (KDITNTEHHQ) and 248–260 (TTEK…HPEK). Positions 231 to 266 (KDITNTEHHQSSNNDLNTTEKHATERHPEKYQGSSV) are disordered. A Glycyl lysine isopeptide (Lys-Gly) (interchain with G-Cter in SUMO2) cross-link involves residue Lys-300. The interval 305 to 336 (NKSKQPGLARSQHNRWTGSKETCNDRQTPSTE) is disordered. Over residues 318-334 (NRWTGSKETCNDRQTPS) the composition is skewed to polar residues. Lys-338 participates in a covalent cross-link: Glycyl lysine isopeptide (Lys-Gly) (interchain with G-Cter in SUMO2). Residues Ser-394, Ser-397, Ser-422, and Ser-433 each carry the phosphoserine modification. Residues Lys-442, Lys-458, and Lys-518 each participate in a glycyl lysine isopeptide (Lys-Gly) (interchain with G-Cter in SUMO2) cross-link. Ser-550 is subject to Phosphoserine. A Glycyl lysine isopeptide (Lys-Gly) (interchain with G-Cter in SUMO2) cross-link involves residue Lys-582. The tract at residues 653–699 (NYNQMPVRHSRNLQLMEDKESATGAKKSNKPNEQTSKRHASDTFPEL) is disordered. Phosphoserine is present on residues Ser-693, Ser-707, and Ser-724. Glycyl lysine isopeptide (Lys-Gly) (interchain with G-Cter in SUMO2) cross-links involve residues Lys-733 and Lys-738. A phosphoserine mark is found at Ser-752 and Ser-839. The disordered stretch occupies residues 886–914 (AHSRSLKKQSPKVTSECEQKEENQGKKES). Over residues 900 to 914 (SECEQKEENQGKKES) the composition is skewed to basic and acidic residues. Glycyl lysine isopeptide (Lys-Gly) (interchain with G-Cter in SUMO2) cross-links involve residues Lys-917 and Lys-986. Phosphoserine; by CHEK2 is present on Ser-987. Ser-1008 carries the phosphoserine modification. Residues 1042 to 1059 (SNINEVGSSTNEVGSSIN) show a composition bias toward polar residues. The interval 1042 to 1062 (SNINEVGSSTNEVGSSINEVG) is disordered. Residue Lys-1079 forms a Glycyl lysine isopeptide (Lys-Gly) (interchain with G-Cter in SUMO2) linkage. Phosphoserine is present on residues Ser-1143, Ser-1189, Ser-1191, Ser-1211, Ser-1217, Ser-1218, Ser-1280, Ser-1328, Ser-1336, Ser-1342, and Ser-1387. The disordered stretch occupies residues 1323 to 1397 (RMRHQSESQG…QSEILTTQQR (75 aa)). Positions 1342–1360 (SDDEERGTGLEEDNQEEQS) are enriched in acidic residues. The span at 1373–1397 (ESETSVSEDCSRLSSQSEILTTQQR) shows a compositional bias: polar residues. Thr-1394 is subject to Phosphothreonine. The tract at residues 1397-1424 (RDTMQDNLIKLQQEMAELEAVLEQHGSQ) is interaction with PALB2. Ser-1423, Ser-1457, Ser-1524, and Ser-1542 each carry phosphoserine. A disordered region spans residues 1442 to 1501 (LRNPEQSTSEKAVLTSQKSSEYPINQNPEGLSADKFEVSADSSTSKNKEPGVERSSPSKC). Residues 1445-1470 (PEQSTSEKAVLTSQKSSEYPINQNPE) are compositionally biased toward polar residues. Positions 1540-1618 (EKSGPHDLME…ESAQSPAAAH (79 aa)) are disordered. The span at 1607–1618 (VAESAQSPAAAH) shows a compositional bias: polar residues. 2 BRCT domains span residues 1642–1736 (STER…DFEV) and 1756–1855 (PDRK…TYLI).

In terms of assembly, heterodimer with BARD1. Part of the BRCA1-associated genome surveillance complex (BASC), which contains BRCA1, MSH2, MSH6, MLH1, ATM, BLM, PMS2 and the MRE11-RAD50-NBN protein (MRN) complex. This association could be a dynamic process changing throughout the cell cycle and within subnuclear domains. Component of the BRCA1-A complex, at least composed of BRCA1, BARD1, UIMC1/RAP80, ABRAXAS1, BRCC3/BRCC36, BABAM2 and BABAM1/NBA1. Interacts (via the BRCT domains) with ABRAXAS1 (phosphorylated form); this is important for recruitment to sites of DNA damage. Can form a heterotetramer with two molecules of ABRAXAS1 (phosphorylated form). Component of the BRCA1-RBBP8 complex. Interacts (via the BRCT domains) with RBBP8 ('Ser-327' phosphorylated form); the interaction ubiquitinates RBBP8, regulates CHEK1 activation, and involves RBBP8 in BRCA1-dependent G2/M checkpoint control on DNA damage. Associates with RNA polymerase II holoenzyme. Interacts with SMC1A, NELFB, DCLRE1C, CLSPN. CHEK1, CHEK2, BAP1, BRCC3, UBXN1 and PCLAF. Interacts (via BRCT domains) with BRIP1 (phosphorylated form). Interacts with FANCD2 (ubiquitinated form). Interacts with H2AX (phosphorylated on 'Ser-140'). Interacts (via the BRCT domains) with ACACA (phosphorylated form); the interaction prevents dephosphorylation of ACACA. Part of a BRCA complex containing BRCA1, BRCA2 and PALB2. Interacts directly with PALB2; the interaction is essential for its function in HRR. Interacts directly with BRCA2; the interaction occurs only in the presence of PALB2 which serves as the bridging protein. Interacts (via the BRCT domains) with LMO4; the interaction represses the transcriptional activity of BRCA1. Interacts (via the BRCT domains) with CCAR2 (via N-terminus); the interaction represses the transcriptional activator activity of BRCA1. Interacts with EXD2. Interacts (via C-terminus) with DHX9; this interaction is direct and links BRCA1 to the RNA polymerase II holoenzyme. Interacts with DNA helicase ZGRF1; the interaction is increased following DNA damage induction. In terms of processing, phosphorylated in response to IR, UV, and various stimuli that cause checkpoint activation, probably by ATM or ATR. Phosphorylation at Ser-987 by CHEK2 regulates mitotic spindle assembly. Phosphorylation by AURKA regulates centrosomal microtubule nucleation. Post-translationally, autoubiquitinated, undergoes 'Lys-6'-linked polyubiquitination. 'Lys-6'-linked polyubiquitination does not promote degradation.

It localises to the nucleus. Its subcellular location is the chromosome. It is found in the cytoplasm. The catalysed reaction is S-ubiquitinyl-[E2 ubiquitin-conjugating enzyme]-L-cysteine + [acceptor protein]-L-lysine = [E2 ubiquitin-conjugating enzyme]-L-cysteine + N(6)-ubiquitinyl-[acceptor protein]-L-lysine.. Its pathway is protein modification; protein ubiquitination. Its function is as follows. E3 ubiquitin-protein ligase that specifically mediates the formation of 'Lys-6'-linked polyubiquitin chains and plays a central role in DNA repair by facilitating cellular responses to DNA damage. It is unclear whether it also mediates the formation of other types of polyubiquitin chains. The BRCA1-BARD1 heterodimer coordinates a diverse range of cellular pathways such as DNA damage repair, ubiquitination and transcriptional regulation to maintain genomic stability. Regulates centrosomal microtubule nucleation. Required for appropriate cell cycle arrests after ionizing irradiation in both the S-phase and the G2 phase of the cell cycle. Required for FANCD2 targeting to sites of DNA damage. Inhibits lipid synthesis by binding to inactive phosphorylated ACACA and preventing its dephosphorylation. Contributes to homologous recombination repair (HRR) via its direct interaction with PALB2, fine-tunes recombinational repair partly through its modulatory role in the PALB2-dependent loading of BRCA2-RAD51 repair machinery at DNA breaks. Component of the BRCA1-RBBP8 complex which regulates CHEK1 activation and controls cell cycle G2/M checkpoints on DNA damage via BRCA1-mediated ubiquitination of RBBP8. Acts as a transcriptional activator. In Macaca mulatta (Rhesus macaque), this protein is Breast cancer type 1 susceptibility protein homolog (BRCA1).